Here is a 103-residue protein sequence, read N- to C-terminus: Large ribosomal subunit protein bL21 (103 aa).

Belongs to the bacterial ribosomal protein bL21 family. As to quaternary structure, part of the 50S ribosomal subunit. Contacts protein L20.

This protein binds to 23S rRNA in the presence of protein L20. This chain is Large ribosomal subunit protein bL21, found in Ectopseudomonas mendocina (strain ymp) (Pseudomonas mendocina).